The chain runs to 232 residues: 5'-methylthioadenosine/S-adenosylhomocysteine nucleosidase (232 aa).

Glu-12 serves as the catalytic Proton acceptor. Substrate contacts are provided by residues Gly-78, Val-153, and 174-175 (ME). Asp-198 acts as the Proton donor in catalysis.

The protein belongs to the PNP/UDP phosphorylase family. MtnN subfamily.

The catalysed reaction is S-adenosyl-L-homocysteine + H2O = S-(5-deoxy-D-ribos-5-yl)-L-homocysteine + adenine. It catalyses the reaction S-methyl-5'-thioadenosine + H2O = 5-(methylsulfanyl)-D-ribose + adenine. It carries out the reaction 5'-deoxyadenosine + H2O = 5-deoxy-D-ribose + adenine. The protein operates within amino-acid biosynthesis; L-methionine biosynthesis via salvage pathway; S-methyl-5-thio-alpha-D-ribose 1-phosphate from S-methyl-5'-thioadenosine (hydrolase route): step 1/2. In terms of biological role, catalyzes the irreversible cleavage of the glycosidic bond in both 5'-methylthioadenosine (MTA) and S-adenosylhomocysteine (SAH/AdoHcy) to adenine and the corresponding thioribose, 5'-methylthioribose and S-ribosylhomocysteine, respectively. Also cleaves 5'-deoxyadenosine, a toxic by-product of radical S-adenosylmethionine (SAM) enzymes, into 5-deoxyribose and adenine. This is 5'-methylthioadenosine/S-adenosylhomocysteine nucleosidase from Photobacterium profundum (strain SS9).